The chain runs to 190 residues: Small ribosomal subunit protein uS5 (190 aa).

In terms of domain architecture, S5 DRBM spans 21–84 (FADRLVAINR…EQAKRQMIRV (64 aa)). The tract at residues 156 to 190 (KKEQSPRSVAQRRGKKVADILPKRDEAPAAEAAEA) is disordered. A compositionally biased stretch (basic and acidic residues) spans 171–182 (KVADILPKRDEA).

This sequence belongs to the universal ribosomal protein uS5 family. In terms of assembly, part of the 30S ribosomal subunit. Contacts proteins S4 and S8.

Its function is as follows. With S4 and S12 plays an important role in translational accuracy. Functionally, located at the back of the 30S subunit body where it stabilizes the conformation of the head with respect to the body. In Ruegeria pomeroyi (strain ATCC 700808 / DSM 15171 / DSS-3) (Silicibacter pomeroyi), this protein is Small ribosomal subunit protein uS5.